We begin with the raw amino-acid sequence, 352 residues long: Pyruvate dehydrogenase E1 component subunit beta, mitochondrial (352 aa).

The transit peptide at 1–21 (MALRKCGNLFVARLAGTSTRA) directs the protein to the mitochondrion. Glu81 contacts thiamine diphosphate. K(+)-binding residues include Ile134, Ala182, Ile183, Asp185, and Asn187.

As to quaternary structure, tetramer of 2 alpha and 2 beta subunits. It depends on thiamine diphosphate as a cofactor.

It is found in the mitochondrion matrix. The catalysed reaction is N(6)-[(R)-lipoyl]-L-lysyl-[protein] + pyruvate + H(+) = N(6)-[(R)-S(8)-acetyldihydrolipoyl]-L-lysyl-[protein] + CO2. The pyruvate dehydrogenase complex catalyzes the overall conversion of pyruvate to acetyl-CoA and CO(2). It contains multiple copies of three enzymatic components: pyruvate dehydrogenase (E1), dihydrolipoamide acetyltransferase (E2) and lipoamide dehydrogenase (E3). This is Pyruvate dehydrogenase E1 component subunit beta, mitochondrial (pdhb-1) from Caenorhabditis elegans.